Here is a 109-residue protein sequence, read N- to C-terminus: Red pigment-concentrating prohormone (109 aa).

The first 25 residues, 1–25 (MVRRSGVTLLVVALLVVTLMSSVSA), serve as a signal peptide directing secretion. Q26 is subject to Pyrrolidone carboxylic acid. Residue W33 is modified to Tryptophan amide. The disordered stretch occupies residues 34–78 (GKRAAGASGSNGGVGEAVSGLHPSVGGAPGGVVPPGSSSPGDSCG). 2 stretches are compositionally biased toward low complexity: residues 49-59 (EAVSGLHPSVG) and 67-78 (PPGSSSPGDSCG).

It belongs to the AKH/HRTH/RPCH family.

The protein localises to the secreted. In terms of biological role, this hormone adapts the animal to light backgrounds by stimulating concentration of the pigment of its red body-chromatophores. This is Red pigment-concentrating prohormone from Callinectes sapidus (Blue crab).